We begin with the raw amino-acid sequence, 77 residues long: U14-theraphotoxin-Cg1a 2 (77 aa).

The N-terminal stretch at 1 to 21 (MKTSVLLVILGIAAITVQCTA) is a signal peptide. A propeptide spanning residues 22-49 (SESVKQDSLRTFVDAVLGWNAEMASEAR) is cleaved from the precursor. Intrachain disulfides connect cysteine 50–cysteine 64, cysteine 57–cysteine 69, and cysteine 63–cysteine 75. At lysine 77 the chain carries Lysine amide.

Belongs to the neurotoxin 10 (Hwtx-1) family. 65 (Jztx-21) subfamily. Expressed by the venom gland.

It localises to the secreted. In terms of biological role, probable ion channel inhibitor. This Chilobrachys guangxiensis (Chinese earth tiger tarantula) protein is U14-theraphotoxin-Cg1a 2.